The following is a 111-amino-acid chain: Large ribosomal subunit protein uL23 (111 aa).

Belongs to the universal ribosomal protein uL23 family. In terms of assembly, part of the 50S ribosomal subunit. Contacts protein L29, and trigger factor when it is bound to the ribosome.

One of the early assembly proteins it binds 23S rRNA. One of the proteins that surrounds the polypeptide exit tunnel on the outside of the ribosome. Forms the main docking site for trigger factor binding to the ribosome. This chain is Large ribosomal subunit protein uL23, found in Chlamydia felis (strain Fe/C-56) (Chlamydophila felis).